The primary structure comprises 445 residues: tRNA-2-methylthio-N(6)-dimethylallyladenosine synthase (445 aa).

Positions glutamine 2–lysine 117 constitute an MTTase N-terminal domain. Residues cysteine 11, cysteine 47, cysteine 80, cysteine 157, cysteine 161, and cysteine 164 each contribute to the [4Fe-4S] cluster site. Positions lysine 143–glutamate 374 constitute a Radical SAM core domain. The TRAM domain maps to lysine 377–histidine 441.

The protein belongs to the methylthiotransferase family. MiaB subfamily. As to quaternary structure, monomer. [4Fe-4S] cluster is required as a cofactor.

The protein localises to the cytoplasm. The catalysed reaction is N(6)-dimethylallyladenosine(37) in tRNA + (sulfur carrier)-SH + AH2 + 2 S-adenosyl-L-methionine = 2-methylsulfanyl-N(6)-dimethylallyladenosine(37) in tRNA + (sulfur carrier)-H + 5'-deoxyadenosine + L-methionine + A + S-adenosyl-L-homocysteine + 2 H(+). Its function is as follows. Catalyzes the methylthiolation of N6-(dimethylallyl)adenosine (i(6)A), leading to the formation of 2-methylthio-N6-(dimethylallyl)adenosine (ms(2)i(6)A) at position 37 in tRNAs that read codons beginning with uridine. The chain is tRNA-2-methylthio-N(6)-dimethylallyladenosine synthase from Ehrlichia ruminantium (strain Gardel).